Consider the following 440-residue polypeptide: MDKLLIRGGRPLVGEVPISGAKNAALPELCAALLTADPVTLHNVPRLQDVATMLRLIRNMGVQVDRIANPDCSVADAAGIVRLDAGALSTPEAPYDLVKTMRASVLALGPLLARFGEATVSLPGGCAIGSRPVDQHIKGLQAMGAQIVVEHGYMIARLPQGCTRLRGARITTDMVTVTGTENLLMAATLAEGETVLENAAQEPEVADLAEMLIKMGARIEGHGTSRIRIQGVERLHGCEHAVVADRIEAGTFLCAVAATGGDALLRHGRADHLDAVIDKLRDAGVQVAPEEGGIRVRSPGAAQLKAQGFRTTEYPGFPTDMQAQFMALNVVAQGTATVAETIFENRFMHVNELLRLGAKIQTTDGRVAVIEGLGGAAPAGARLSGATVMATDLRASASLVIAGLVADGETLVDRIYHLDRGYDCMEAKLRGLGADIERIQ.

A phosphoenolpyruvate-binding site is contributed by 22–23 (KN). Residue arginine 102 coordinates UDP-N-acetyl-alpha-D-glucosamine. Cysteine 126 serves as the catalytic Proton donor. At cysteine 126 the chain carries 2-(S-cysteinyl)pyruvic acid O-phosphothioketal. Residues 131-135 (RPVDQ), aspartate 320, and isoleucine 342 each bind UDP-N-acetyl-alpha-D-glucosamine.

It belongs to the EPSP synthase family. MurA subfamily.

It localises to the cytoplasm. It catalyses the reaction phosphoenolpyruvate + UDP-N-acetyl-alpha-D-glucosamine = UDP-N-acetyl-3-O-(1-carboxyvinyl)-alpha-D-glucosamine + phosphate. It functions in the pathway cell wall biogenesis; peptidoglycan biosynthesis. Functionally, cell wall formation. Adds enolpyruvyl to UDP-N-acetylglucosamine. The protein is UDP-N-acetylglucosamine 1-carboxyvinyltransferase of Acidovorax ebreus (strain TPSY) (Diaphorobacter sp. (strain TPSY)).